The primary structure comprises 633 residues: Alpha-amylase (633 aa).

Glutamate 123 serves as the catalytic Nucleophile. The Proton donor role is filled by aspartate 214.

The protein belongs to the glycosyl hydrolase 57 family.

It carries out the reaction Endohydrolysis of (1-&gt;4)-alpha-D-glucosidic linkages in polysaccharides containing three or more (1-&gt;4)-alpha-linked D-glucose units.. The chain is Alpha-amylase (amyA) from Pyrococcus horikoshii (strain ATCC 700860 / DSM 12428 / JCM 9974 / NBRC 100139 / OT-3).